The primary structure comprises 1607 residues: Thrombospondin type-1 domain-containing protein 7B (1607 aa).

Positions 1 to 31 (MFLRSDLAVTHWVSRSMRKLFLVLSLLLSQA) are cleaved as a signal peptide. The Extracellular segment spans residues 32 to 1556 (AHLEGRKDNQ…QPLDPDGRVK (1525 aa)). 18 consecutive TSP type-1 domains span residues 40 to 98 (NQFL…RVCD), 102 to 177 (DLFQ…IPCP), 179 to 233 (DCVV…VSCP), 336 to 392 (DCET…IAEG), 399 to 482 (PRYS…VPCS), 484 to 543 (DCIV…PMCH), 601 to 661 (DCVV…HSCT), 662 to 735 (QLYW…LPCK), 737 to 796 (DCLV…SLCP), 797 to 869 (SYRW…IPCR), 871 to 924 (DCTF…CPCD), 925 to 999 (TFMS…IPCP), 1001 to 1126 (DCKL…LLCP), 1128 to 1182 (ECVM…ENCF), 1183 to 1246 (QFQY…VECV), 1248 to 1303 (NCQL…TPCY), 1304 to 1369 (SWVL…VPCP), and 1371 to 1432 (DCHI…GKCY). Residues Asn150 and Asn219 are each glycosylated (N-linked (GlcNAc...) asparagine). 3 disulfide bridges follow: Cys411-Cys477, Cys431-Cys481, and Cys442-Cys466. 3 cysteine pairs are disulfide-bonded: Cys602-Cys643, Cys613-Cys617, and Cys655-Cys660. N-linked (GlcNAc...) asparagine glycosylation occurs at Asn683. Disulfide bonds link Cys738-Cys779, Cys749-Cys753, and Cys789-Cys795. Residue Asn757 is glycosylated (N-linked (GlcNAc...) asparagine). An N-linked (GlcNAc...) asparagine glycan is attached at Asn842. Residue Asn933 is glycosylated (N-linked (GlcNAc...) asparagine). 5 disulfides stabilise this stretch: Cys937-Cys994, Cys960-Cys998, Cys971-Cys984, Cys1002-Cys1039, and Cys1013-Cys1017. Asn985 is a glycosylation site (N-linked (GlcNAc...) asparagine). Asn1105 carries an N-linked (GlcNAc...) asparagine glycan. A disulfide bridge links Cys1121 with Cys1125. Residues Asn1187 and Asn1199 are each glycosylated (N-linked (GlcNAc...) asparagine). 3 disulfide bridges follow: Cys1249–Cys1287, Cys1260–Cys1264, and Cys1297–Cys1302. 2 N-linked (GlcNAc...) asparagine glycosylation sites follow: Asn1309 and Asn1335. 3 disulfides stabilise this stretch: Cys1372/Cys1416, Cys1383/Cys1387, and Cys1426/Cys1431. N-linked (GlcNAc...) asparagine glycans are attached at residues Asn1457 and Asn1525. A helical membrane pass occupies residues 1557 to 1577 (MWVYGVSGGSFLIMIFLVFTS). The Cytoplasmic portion of the chain corresponds to 1578–1607 (YLVCKKPKPHQSTPRHQKPLTLAYDGDLDM).

The protein resides in the membrane. This Mus musculus (Mouse) protein is Thrombospondin type-1 domain-containing protein 7B.